Here is a 142-residue protein sequence, read N- to C-terminus: ATP synthase epsilon chain (142 aa).

This sequence belongs to the ATPase epsilon chain family. F-type ATPases have 2 components, CF(1) - the catalytic core - and CF(0) - the membrane proton channel. CF(1) has five subunits: alpha(3), beta(3), gamma(1), delta(1), epsilon(1). CF(0) has three main subunits: a, b and c.

It localises to the cell inner membrane. Functionally, produces ATP from ADP in the presence of a proton gradient across the membrane. The sequence is that of ATP synthase epsilon chain from Actinobacillus succinogenes (strain ATCC 55618 / DSM 22257 / CCUG 43843 / 130Z).